We begin with the raw amino-acid sequence, 270 residues long: Urease accessory protein UreD (270 aa).

It belongs to the UreD family. UreD, UreF and UreG form a complex that acts as a GTP-hydrolysis-dependent molecular chaperone, activating the urease apoprotein by helping to assemble the nickel containing metallocenter of UreC. The UreE protein probably delivers the nickel.

The protein resides in the cytoplasm. In terms of biological role, required for maturation of urease via the functional incorporation of the urease nickel metallocenter. The protein is Urease accessory protein UreD of Klebsiella pneumoniae.